The chain runs to 166 residues: MRLILLSGLLLLGIFLANGDEVDPDRKLLNSLIDALMHLQREFANLKGSFLIVHKARSFGSGSERMYVTNKEIKNFEALRQICEQADGHIPSPQLENQNKAFANVLERHGKEAYLVVGDSANFTNWAAGEPNKAAGACVKADTHGSWHSASCDDNLLVVCEFYFML.

An N-terminal signal peptide occupies residues 1–19; that stretch reads MRLILLSGLLLLGIFLANG. Residues 46 to 161 enclose the C-type lectin domain; sequence LKGSFLIVHK…CDDNLLVVCE (116 aa). 2 disulfides stabilise this stretch: Cys83–Cys160 and Cys138–Cys152. An N-linked (GlcNAc...) asparagine glycan is attached at Asn122.

This sequence belongs to the alpha-type phospholipase A2 inhibitor family. In terms of assembly, homotrimer; non-covalently linked. Expressed by the liver.

It localises to the secreted. Its function is as follows. This phospholipase A2 inhibitor binds directly phospholipase A2 in the presence or absence of calcium. This Bothrops jararacussu (Jararacussu) protein is Phospholipase A2 inhibitor.